The following is a 462-amino-acid chain: Hydroxymethylglutaryl-CoA synthase (462 aa).

E92 functions as the Proton donor/acceptor in the catalytic mechanism. C124 acts as the Acyl-thioester intermediate in catalysis. (3S)-3-hydroxy-3-methylglutaryl-CoA contacts are provided by C124, T167, S219, H257, K266, N327, and S360. Catalysis depends on H257, which acts as the Proton donor/acceptor. K408 is covalently cross-linked (Glycyl lysine isopeptide (Lys-Gly) (interchain with G-Cter in SUMO)).

This sequence belongs to the thiolase-like superfamily. HMG-CoA synthase family. In terms of processing, ubiquitinated.

It carries out the reaction acetoacetyl-CoA + acetyl-CoA + H2O = (3S)-3-hydroxy-3-methylglutaryl-CoA + CoA + H(+). It participates in metabolic intermediate biosynthesis; (R)-mevalonate biosynthesis; (R)-mevalonate from acetyl-CoA: step 2/3. This enzyme condenses acetyl-CoA with acetoacetyl-CoA to form HMG-CoA, which is the substrate for HMG-CoA reductase. The protein is Hydroxymethylglutaryl-CoA synthase of Caenorhabditis elegans.